Reading from the N-terminus, the 207-residue chain is Ribosomal RNA large subunit methyltransferase E (207 aa).

The S-adenosyl-L-methionine site is built by glycine 56, tryptophan 58, aspartate 76, aspartate 94, and aspartate 116. Catalysis depends on lysine 156, which acts as the Proton acceptor.

The protein belongs to the class I-like SAM-binding methyltransferase superfamily. RNA methyltransferase RlmE family.

It is found in the cytoplasm. The enzyme catalyses uridine(2552) in 23S rRNA + S-adenosyl-L-methionine = 2'-O-methyluridine(2552) in 23S rRNA + S-adenosyl-L-homocysteine + H(+). Specifically methylates the uridine in position 2552 of 23S rRNA at the 2'-O position of the ribose in the fully assembled 50S ribosomal subunit. The protein is Ribosomal RNA large subunit methyltransferase E of Desulfatibacillum aliphaticivorans.